The primary structure comprises 571 residues: UvrABC system protein C (571 aa).

The 79-residue stretch at 15–93 (TSPGVYLWKD…VDRFNPEFNI (79 aa)) folds into the GIY-YIG domain. Positions 184 to 219 (NNYLNELTNKMHTAANNMQFELALFLRDGLTYLKKL) constitute a UVR domain.

Belongs to the UvrC family. In terms of assembly, interacts with UvrB in an incision complex.

It localises to the cytoplasm. Its function is as follows. The UvrABC repair system catalyzes the recognition and processing of DNA lesions. UvrC both incises the 5' and 3' sides of the lesion. The N-terminal half is responsible for the 3' incision and the C-terminal half is responsible for the 5' incision. The polypeptide is UvrABC system protein C (Mycoplasmopsis agalactiae (strain NCTC 10123 / CIP 59.7 / PG2) (Mycoplasma agalactiae)).